Here is a 64-residue protein sequence, read N- to C-terminus: Tracheal antimicrobial peptide (64 aa).

The signal sequence occupies residues 1 to 26 (MRLHHLLLALLFLVLSAWSGFTQGVG). Cystine bridges form between Cys-31/Cys-60, Cys-38/Cys-53, and Cys-43/Cys-61.

The protein belongs to the beta-defensin family. LAP/TAP subfamily. Tracheal epithelium.

Its subcellular location is the secreted. Functionally, has antibacterial activity in vitro against Escherichia coli, Staphylococcus aureus, Klebsiella pneumonia, and Pseudomonas aeruginosa. In addition, the peptide is active against Candida albicans, indicating a broad spectrum of activity. The sequence is that of Tracheal antimicrobial peptide from Bos taurus (Bovine).